We begin with the raw amino-acid sequence, 196 residues long: Probable malonic semialdehyde reductase RutE (196 aa).

This sequence belongs to the nitroreductase family. HadB/RutE subfamily. FMN serves as cofactor.

It catalyses the reaction 3-hydroxypropanoate + NADP(+) = 3-oxopropanoate + NADPH + H(+). May reduce toxic product malonic semialdehyde to 3-hydroxypropionic acid, which is excreted. The sequence is that of Probable malonic semialdehyde reductase RutE from Escherichia coli (strain SMS-3-5 / SECEC).